The following is a 443-amino-acid chain: CBL-interacting protein kinase 29 (443 aa).

The 261-residue stretch at 32–292 folds into the Protein kinase domain; that stretch reads YELGGLLGRG…TEEIITHPWF (261 aa). Residues 38 to 46 and Lys61 contribute to the ATP site; that span reads LGRGASAKV. Asp164 acts as the Proton acceptor in catalysis. The segment at 182–207 is activation loop; the sequence is DFGLGAVADGALHHTLCGTPAYVAPE. The region spanning 313–347 is the NAF domain; it reads AKFKTEFKEDDMARDMTAFDILACSPGSDLSGLFG. The segment at 350–379 is PPI; that stretch reads PGKERVFVGEPAAAVLSRVEEAGKKEGYMV.

The protein belongs to the protein kinase superfamily. CAMK Ser/Thr protein kinase family. SNF1 subfamily. Requires Mn(2+) as cofactor.

It catalyses the reaction L-seryl-[protein] + ATP = O-phospho-L-seryl-[protein] + ADP + H(+). The enzyme catalyses L-threonyl-[protein] + ATP = O-phospho-L-threonyl-[protein] + ADP + H(+). Functionally, CIPK serine-threonine protein kinases interact with CBL proteins. Binding of a CBL protein to the regulatory NAF domain of CIPK protein lead to the activation of the kinase in a calcium-dependent manner. This chain is CBL-interacting protein kinase 29 (CIPK29), found in Oryza sativa subsp. japonica (Rice).